A 486-amino-acid chain; its full sequence is Ribulose bisphosphate carboxylase large chain (486 aa).

Positions 126 and 176 each coordinate substrate. Residue Lys-178 is the Proton acceptor of the active site. Residue Lys-180 coordinates substrate. Lys-204, Asp-206, and Glu-207 together coordinate Mg(2+). Lys-204 carries the post-translational modification N6-carboxylysine. The active-site Proton acceptor is the His-296. Substrate-binding residues include Arg-297, His-329, and Ser-381.

It belongs to the RuBisCO large chain family. Type I subfamily. In terms of assembly, heterohexadecamer of 8 large chains and 8 small chains. It depends on Mg(2+) as a cofactor.

It carries out the reaction 2 (2R)-3-phosphoglycerate + 2 H(+) = D-ribulose 1,5-bisphosphate + CO2 + H2O. The catalysed reaction is D-ribulose 1,5-bisphosphate + O2 = 2-phosphoglycolate + (2R)-3-phosphoglycerate + 2 H(+). In terms of biological role, ruBisCO catalyzes two reactions: the carboxylation of D-ribulose 1,5-bisphosphate, the primary event in carbon dioxide fixation, as well as the oxidative fragmentation of the pentose substrate. Both reactions occur simultaneously and in competition at the same active site. In Sinorhizobium medicae (strain WSM419) (Ensifer medicae), this protein is Ribulose bisphosphate carboxylase large chain.